The chain runs to 475 residues: Aspartyl/glutamyl-tRNA(Asn/Gln) amidotransferase subunit B (475 aa).

Belongs to the GatB/GatE family. GatB subfamily. As to quaternary structure, heterotrimer of A, B and C subunits.

The catalysed reaction is L-glutamyl-tRNA(Gln) + L-glutamine + ATP + H2O = L-glutaminyl-tRNA(Gln) + L-glutamate + ADP + phosphate + H(+). It catalyses the reaction L-aspartyl-tRNA(Asn) + L-glutamine + ATP + H2O = L-asparaginyl-tRNA(Asn) + L-glutamate + ADP + phosphate + 2 H(+). In terms of biological role, allows the formation of correctly charged Asn-tRNA(Asn) or Gln-tRNA(Gln) through the transamidation of misacylated Asp-tRNA(Asn) or Glu-tRNA(Gln) in organisms which lack either or both of asparaginyl-tRNA or glutaminyl-tRNA synthetases. The reaction takes place in the presence of glutamine and ATP through an activated phospho-Asp-tRNA(Asn) or phospho-Glu-tRNA(Gln). This Mycoplasma mobile (strain ATCC 43663 / 163K / NCTC 11711) (Mesomycoplasma mobile) protein is Aspartyl/glutamyl-tRNA(Asn/Gln) amidotransferase subunit B.